Here is a 1068-residue protein sequence, read N- to C-terminus: Protein AF-10 (1068 aa).

A PHD-type 1 zinc finger spans residues 22 to 74; it reads IGGCCVCSDERGWAENPLVYCDGHGCSVAVHQACYGIVQVPTGPWFCRKCESQ. The C2HC pre-PHD-type zinc finger occupies 79 to 112; sequence RVRCELCPHKDGALKRTDNGGWAHVVCALYIPEV. The required for interaction with histone H3 stretch occupies residues 106–190; the sequence is ALYIPEVQFA…EGNGADNVQY (85 aa). The PHD-type 2 zinc finger occupies 135–198; the sequence is KTCYICDEQG…QYCGYCKYHF (64 aa). The disordered stretch occupies residues 207–260; sequence GSNRSYEQSLSDSSSHSQDKHHEKEKKKYKEKDKHKQKHKKQPEPSPALVPSLT. Ser217 carries the post-translational modification Phosphoserine. Basic and acidic residues predominate over residues 223–240; sequence SQDKHHEKEKKKYKEKDK. Ser252 is modified (phosphoserine). Residue Lys280 forms a Glycyl lysine isopeptide (Lys-Gly) (interchain with G-Cter in SUMO2) linkage. The span at 296 to 305 shows a compositional bias: polar residues; that stretch reads EVSAHTSSGK. Disordered stretches follow at residues 296 to 416 and 428 to 506; these read EVSA…SFSS and SQPK…SVAS. Basic and acidic residues predominate over residues 306–317; sequence DVSEARGSEGKG. Positions 340–351 are enriched in polar residues; that stretch reads TAVSASSPFPQG. Low complexity predominate over residues 352-372; it reads SFSGTPGSVKSSSGSSVQSPQ. 3 stretches are compositionally biased toward polar residues: residues 387-396, 404-416, and 428-446; these read YTHTQQPSST, SGSQ…SFSS, and SQPK…SSLP. Position 436 is a phosphoserine (Ser436). Residues 465–483 are compositionally biased toward basic residues; that stretch reads EKKRKGNKQSKHGPGRPKG. The segment covering 490–506 has biased composition (low complexity); it reads VSHLSVSSASPTSSVAS. Ser532 is subject to Phosphoserine. Residues 583-594 show a composition bias toward low complexity; it reads SGSGSSTPVSSS. Disordered regions lie at residues 583-613 and 660-698; these read SGSG…LSPS and SESS…NLQL. Over residues 595-604 the composition is skewed to polar residues; it reads HIPQQSSGHL. Low complexity predominate over residues 681–692; it reads SSPRGSLSPRSP. Phosphoserine is present on residues Ser686, Ser688, and Ser691. Residues 752 to 780 form a leucine-zipper region; the sequence is LQVENRRLEEQIKNLTAKKERLQLLNAQL. Disordered regions lie at residues 786-869 and 1040-1068; these read AITT…VSGV and PFLT…QEKS. Over residues 787–816 the composition is skewed to polar residues; that stretch reads ITTNPSPSHQMHTYTAQTAPPPDSLNSSKS. Low complexity-rich tracts occupy residues 836 to 850 and 857 to 869; these read LTSS…SALS and QSPA…VSGV. Polar residues predominate over residues 1040 to 1054; sequence PFLTIHGDSTSQKVT.

Self-associates. Interacts with FSTL3; the interaction enhances MLLT10 in vitro transcriptional activity and self-association. Interacts with YEATS4. Interacts with SS18. Interacts with DOT1L. Interacts with histone H3; interaction is necessary for MLLT10 binding to nucleosomes; interaction is inhibited by histone H3 'Lys-27' methylations (H3K27me1, H3K27me2 and H3K27me3) amd acetylation; interaction stabilizes association of MLLT10 at chromatin; interaction is essential for histone H3 'Lys-79' dimethylation (H3K79me2).

It localises to the nucleus. In terms of biological role, probably involved in transcriptional regulation. Binds to cruciform DNA. In cells, binding to unmodified histone H3 regulates DOT1L functions including histone H3 'Lys-79' dimethylation (H3K79me2) and gene activation. The sequence is that of Protein AF-10 from Mus musculus (Mouse).